Reading from the N-terminus, the 234-residue chain is Leucyl/phenylalanyl-tRNA--protein transferase (234 aa).

This sequence belongs to the L/F-transferase family.

The protein resides in the cytoplasm. It carries out the reaction N-terminal L-lysyl-[protein] + L-leucyl-tRNA(Leu) = N-terminal L-leucyl-L-lysyl-[protein] + tRNA(Leu) + H(+). The catalysed reaction is N-terminal L-arginyl-[protein] + L-leucyl-tRNA(Leu) = N-terminal L-leucyl-L-arginyl-[protein] + tRNA(Leu) + H(+). It catalyses the reaction L-phenylalanyl-tRNA(Phe) + an N-terminal L-alpha-aminoacyl-[protein] = an N-terminal L-phenylalanyl-L-alpha-aminoacyl-[protein] + tRNA(Phe). Functions in the N-end rule pathway of protein degradation where it conjugates Leu, Phe and, less efficiently, Met from aminoacyl-tRNAs to the N-termini of proteins containing an N-terminal arginine or lysine. The sequence is that of Leucyl/phenylalanyl-tRNA--protein transferase from Pectobacterium atrosepticum (strain SCRI 1043 / ATCC BAA-672) (Erwinia carotovora subsp. atroseptica).